The chain runs to 102 residues: Small ribosomal subunit protein uS10 (102 aa).

This sequence belongs to the universal ribosomal protein uS10 family. In terms of assembly, part of the 30S ribosomal subunit.

In terms of biological role, involved in the binding of tRNA to the ribosomes. The sequence is that of Small ribosomal subunit protein uS10 from Thiobacillus denitrificans (strain ATCC 25259 / T1).